Consider the following 246-residue polypeptide: Probable S-methyl-5'-thioinosine phosphorylase (246 aa).

Phosphate-binding positions include Thr-10 and 52–53 (RH). Met-185 provides a ligand contact to substrate. Position 186 (Thr-186) interacts with phosphate. Substrate is bound at residue 209–211 (NPA).

Belongs to the PNP/MTAP phosphorylase family. MTAP subfamily. As to quaternary structure, homotrimer.

The catalysed reaction is S-methyl-5'-thioinosine + phosphate = 5-(methylsulfanyl)-alpha-D-ribose 1-phosphate + hypoxanthine. It participates in purine metabolism; purine nucleoside salvage. Catalyzes the reversible phosphorylation of S-methyl-5'-thioinosine (MTI) to hypoxanthine and 5-methylthioribose-1-phosphate. Involved in the breakdown of S-methyl-5'-thioadenosine (MTA), a major by-product of polyamine biosynthesis. Catabolism of (MTA) occurs via deamination to MTI and phosphorolysis to hypoxanthine. This Pseudomonas syringae pv. tomato (strain ATCC BAA-871 / DC3000) protein is Probable S-methyl-5'-thioinosine phosphorylase.